Consider the following 230-residue polypeptide: CRP-like protein Clp (230 aa).

Residue 18-139 participates in a nucleoside 3',5'-cyclic phosphate binding; it reads PSLALDAGTI…APKILYAIGV (122 aa). Residues 158 to 230 form the HTH crp-type domain; the sequence is LDVTDRIVRT…GKTVVLYGTR (73 aa). The H-T-H motif DNA-binding region spans 190–209; the sequence is RQELARLVGCSREMAGRVLK.

As to quaternary structure, homodimer.

The protein localises to the cytoplasm. Its activity is regulated as follows. Allosterically inhibited by cyclic di-GMP (c-di-GMP), which binds to Clp and abolishes its ability to bind its target gene promoter. In terms of biological role, global transcriptional regulator that regulates virulence factors production by activating or repressing the expression of a large set of genes in diffusible signal factor (DSF) pathway. This Xanthomonas oryzae pv. oryzae (strain MAFF 311018) protein is CRP-like protein Clp (clp).